The primary structure comprises 134 residues: UPF0412 protein YaaI (134 aa).

The first 23 residues, 1-23 (MRSVLTISASLLFGLALSSVAHA), serve as a signal peptide directing secretion.

The protein belongs to the UPF0412 family.

The polypeptide is UPF0412 protein YaaI (Salmonella paratyphi B (strain ATCC BAA-1250 / SPB7)).